Consider the following 372-residue polypeptide: 4-hydroxy-3-methylbut-2-en-1-yl diphosphate synthase (flavodoxin) (372 aa).

[4Fe-4S] cluster contacts are provided by Cys270, Cys273, Cys305, and Glu312.

This sequence belongs to the IspG family. It depends on [4Fe-4S] cluster as a cofactor.

It carries out the reaction (2E)-4-hydroxy-3-methylbut-2-enyl diphosphate + oxidized [flavodoxin] + H2O + 2 H(+) = 2-C-methyl-D-erythritol 2,4-cyclic diphosphate + reduced [flavodoxin]. The protein operates within isoprenoid biosynthesis; isopentenyl diphosphate biosynthesis via DXP pathway; isopentenyl diphosphate from 1-deoxy-D-xylulose 5-phosphate: step 5/6. In terms of biological role, converts 2C-methyl-D-erythritol 2,4-cyclodiphosphate (ME-2,4cPP) into 1-hydroxy-2-methyl-2-(E)-butenyl 4-diphosphate. The chain is 4-hydroxy-3-methylbut-2-en-1-yl diphosphate synthase (flavodoxin) from Aliivibrio salmonicida (strain LFI1238) (Vibrio salmonicida (strain LFI1238)).